A 697-amino-acid chain; its full sequence is Elongation factor G (697 aa).

The 276-residue stretch at 8-283 folds into the tr-type G domain; it reads EHIRNIGICA…AVVDFLPSPT (276 aa). Residues 17 to 24, 81 to 85, and 135 to 138 each bind GTP; these read AHIDAGKT, DTPGH, and NKMD.

The protein belongs to the TRAFAC class translation factor GTPase superfamily. Classic translation factor GTPase family. EF-G/EF-2 subfamily.

The protein localises to the cytoplasm. In terms of biological role, catalyzes the GTP-dependent ribosomal translocation step during translation elongation. During this step, the ribosome changes from the pre-translocational (PRE) to the post-translocational (POST) state as the newly formed A-site-bound peptidyl-tRNA and P-site-bound deacylated tRNA move to the P and E sites, respectively. Catalyzes the coordinated movement of the two tRNA molecules, the mRNA and conformational changes in the ribosome. In Rickettsia massiliae (strain Mtu5), this protein is Elongation factor G.